The chain runs to 562 residues: Abrin-c (562 aa).

A signal peptide spans methionine 1–asparagine 34. Glutamine 35 carries the post-translational modification Pyrrolidone carboxylic acid. Glutamate 198 is an active-site residue. Asparagine 234 carries N-linked (GlcNAc...) asparagine glycosylation. Disulfide bonds link cysteine 281/cysteine 303, cysteine 320/cysteine 339, and cysteine 363/cysteine 380. Positions tyrosine 307 to glycine 434 constitute a Ricin B-type lectin 1 domain. Residues aspartate 317–serine 359 form a 1-alpha repeat. Residues asparagine 360 to asparagine 400 form a 1-beta repeat. N-linked (GlcNAc...) asparagine glycans are attached at residues asparagine 395 and asparagine 435. A 1-gamma repeat occupies serine 403–asparagine 435. One can recognise a Ricin B-type lectin 2 domain in the interval threonine 437 to leucine 561. A 2-alpha repeat occupies serine 448–serine 483. Intrachain disulfides connect cysteine 451/cysteine 464 and cysteine 490/cysteine 507. The 2-beta repeat unit spans residues threonine 487–asparagine 526. The 2-gamma repeat unit spans residues aspartate 529–phenylalanine 562.

The protein in the N-terminal section; belongs to the ribosome-inactivating protein family. Type 2 RIP subfamily. Disulfide-linked dimer of A and B chains.

It catalyses the reaction Endohydrolysis of the N-glycosidic bond at one specific adenosine on the 28S rRNA.. In terms of biological role, the A chain is responsible for inhibiting protein synthesis through the catalytic inactivation of 60S ribosomal subunits by removing adenine from position 4,324 of 28S rRNA. Abrin-a is more toxic than ricin. The B chain is a galactose-specific lectin that facilitates the binding of abrin to the cell membrane that precedes endocytosis. The sequence is that of Abrin-c from Abrus precatorius (Indian licorice).